A 524-amino-acid polypeptide reads, in one-letter code: GMP synthase [glutamine-hydrolyzing] (524 aa).

The region spanning 5–195 is the Glutamine amidotransferase type-1 domain; sequence KVIVIDFGGQ…VRGVCGCAGT (191 aa). Catalysis depends on C82, which acts as the Nucleophile. Residues H169 and E171 contribute to the active site. The 194-residue stretch at 196 to 389 folds into the GMPS ATP-PPase domain; that stretch reads WKMDAFVENT…LGIPEHLVFR (194 aa). 223–229 contacts ATP; that stretch reads SGGVDSS.

In terms of assembly, homodimer.

It catalyses the reaction XMP + L-glutamine + ATP + H2O = GMP + L-glutamate + AMP + diphosphate + 2 H(+). Its pathway is purine metabolism; GMP biosynthesis; GMP from XMP (L-Gln route): step 1/1. Functionally, catalyzes the synthesis of GMP from XMP. The sequence is that of GMP synthase [glutamine-hydrolyzing] from Lachnospira eligens (strain ATCC 27750 / DSM 3376 / VPI C15-48 / C15-B4) (Eubacterium eligens).